Consider the following 85-residue polypeptide: Beta-insect depressant toxin BmKITa (85 aa).

Positions 1–21 (MKLFLLLLISASMLIDGLVNA) are cleaved as a signal peptide. One can recognise an LCN-type CS-alpha/beta domain in the interval 22 to 82 (DGYIRGSNGC…TWKSESNTCG (61 aa)). Disulfide bonds link Cys31–Cys81, Cys35–Cys56, Cys42–Cys63, and Cys46–Cys65. Gly82 carries the glycine amide modification.

In terms of tissue distribution, expressed by the venom gland.

Its subcellular location is the secreted. Functionally, depressant insect beta-toxins cause a transient contraction paralysis followed by a slow flaccid paralysis. They bind voltage-independently at site-4 of sodium channels (Nav) and shift the voltage of activation toward more negative potentials thereby affecting sodium channel activation and promoting spontaneous and repetitive firing. This toxin also displays an evident analgesic effect but is devoid of any toxicity on mice. This Olivierus martensii (Manchurian scorpion) protein is Beta-insect depressant toxin BmKITa.